Here is a 183-residue protein sequence, read N- to C-terminus: uncharacterized protein (183 aa).

It to M.leprae ML2442.

This is an uncharacterized protein from Mycobacterium tuberculosis (strain CDC 1551 / Oshkosh).